Reading from the N-terminus, the 137-residue chain is 2-iminobutanoate/2-iminopropanoate deaminase (137 aa).

The residue at position 2 (Ser-2) is an N-acetylserine. N6-succinyllysine is present on residues Lys-13, Lys-60, and Lys-67. Thr-74 is subject to Phosphothreonine. The residue at position 136 (Ser-136) is a Phosphoserine.

The protein belongs to the RutC family. In terms of assembly, homotrimer. Interacts with YTHDF2. Expressed predominantly in liver and kidney. Lower levels in lung and brain.

The protein localises to the cytoplasm. Its subcellular location is the nucleus. It is found in the peroxisome. It localises to the mitochondrion. It catalyses the reaction 2-iminobutanoate + H2O = 2-oxobutanoate + NH4(+). The catalysed reaction is 2-iminopropanoate + H2O = pyruvate + NH4(+). Catalyzes the hydrolytic deamination of enamine/imine intermediates that form during the course of normal metabolism. May facilitate the release of ammonia from these potentially toxic reactive metabolites, reducing their impact on cellular components. It may act on enamine/imine intermediates formed by several types of pyridoxal-5'-phosphate-dependent dehydratases including L-threonine dehydratase. In terms of biological role, also promotes endoribonucleolytic cleavage of some transcripts by promoting recruitment of the ribonuclease P/MRP complex. Acts by bridging YTHDF2 and the ribonuclease P/MRP complex. RIDA/HRSP12 binds to N6-methyladenosine (m6A)-containing mRNAs containing a 5'-GGUUC-3' motif: cooperative binding of RIDA/HRSP12 and YTHDF2 to such transcripts lead to recruitment of the ribonuclease P/MRP complex and subsequent endoribonucleolytic cleavage. In Homo sapiens (Human), this protein is 2-iminobutanoate/2-iminopropanoate deaminase.